The chain runs to 191 residues: Ribosome maturation factor RimM (191 aa).

Residues 102-185 (EEEYHVSQLI…RIEINPPKGL (84 aa)) form the PRC barrel domain.

Belongs to the RimM family. In terms of assembly, binds ribosomal protein uS19.

Its subcellular location is the cytoplasm. In terms of biological role, an accessory protein needed during the final step in the assembly of 30S ribosomal subunit, possibly for assembly of the head region. Essential for efficient processing of 16S rRNA. May be needed both before and after RbfA during the maturation of 16S rRNA. It has affinity for free ribosomal 30S subunits but not for 70S ribosomes. This chain is Ribosome maturation factor RimM, found in Crocosphaera subtropica (strain ATCC 51142 / BH68) (Cyanothece sp. (strain ATCC 51142)).